Here is a 1159-residue protein sequence, read N- to C-terminus: DNA-directed RNA polymerase subunit beta' (1159 aa).

Residues Asp398, Asp400, and Asp402 each contribute to the Mg(2+) site. Zn(2+) contacts are provided by Cys741, Cys815, Cys822, and Cys825.

This sequence belongs to the RNA polymerase beta' chain family. In terms of assembly, the RNAP catalytic core consists of 2 alpha, 1 beta, 1 beta' and 1 omega subunit. When a sigma factor is associated with the core the holoenzyme is formed, which can initiate transcription. Mg(2+) serves as cofactor. The cofactor is Zn(2+).

It catalyses the reaction RNA(n) + a ribonucleoside 5'-triphosphate = RNA(n+1) + diphosphate. DNA-dependent RNA polymerase catalyzes the transcription of DNA into RNA using the four ribonucleoside triphosphates as substrates. The polypeptide is DNA-directed RNA polymerase subunit beta' (Porphyromonas cangingivalis).